The following is a 467-amino-acid chain: Abscisic acid 8'-hydroxylase 1 (467 aa).

The chain crosses the membrane as a helical span at residues 5 to 24 (ALFLTLFAGSLFLYFLRCLI). Residue Cys411 participates in heme binding.

The protein belongs to the cytochrome P450 family. It depends on heme as a cofactor. Mainly expressed in flowers, siliques, roots and stems. Lower expression in rosette leaves and dry seeds. Expressed in vascular tissues of embryo during the seed development.

Its subcellular location is the membrane. The enzyme catalyses 2-cis-(+)-abscisate + reduced [NADPH--hemoprotein reductase] + O2 = (+)-8'-hydroxyabscisate + oxidized [NADPH--hemoprotein reductase] + H2O + H(+). It participates in plant hormone degradation; abscisic acid degradation. Its function is as follows. Involved in the oxidative degradation of abscisic acid. Plays an important role in determining abscisic acid levels in dry seeds and in the control of postgermination growth. This chain is Abscisic acid 8'-hydroxylase 1 (CYP707A1), found in Arabidopsis thaliana (Mouse-ear cress).